A 961-amino-acid chain; its full sequence is Leucine--tRNA ligase (961 aa).

Positions 41 to 51 match the 'HIGH' region motif; that stretch reads PYLNGNLHAGH. Positions 632-636 match the 'KMSKS' region motif; that stretch reads KMSKS. Lys-635 is an ATP binding site.

This sequence belongs to the class-I aminoacyl-tRNA synthetase family.

It is found in the cytoplasm. It catalyses the reaction tRNA(Leu) + L-leucine + ATP = L-leucyl-tRNA(Leu) + AMP + diphosphate. The polypeptide is Leucine--tRNA ligase (Methanosarcina acetivorans (strain ATCC 35395 / DSM 2834 / JCM 12185 / C2A)).